Reading from the N-terminus, the 499-residue chain is Putative protease Do-like 12, mitochondrial (499 aa).

A mitochondrion-targeting transit peptide spans 1–24 (MLFRSCVGMVSRYSRALLPTITIS). The interval 94 to 259 (GGSGFAIAGK…IPTPIIRHFI (166 aa)) is serine protease. Residues His-110, Asp-144, and Ser-222 each act as charge relay system in the active site. The PDZ domain maps to 272–356 (GSLVLSCQSM…DENILVKVLR (85 aa)).

Belongs to the peptidase S1C family.

It localises to the mitochondrion matrix. Its function is as follows. Putative serine protease. The polypeptide is Putative protease Do-like 12, mitochondrial (DEGP12) (Arabidopsis thaliana (Mouse-ear cress)).